Consider the following 235-residue polypeptide: Cytochrome c oxidase subunit 2 (235 aa).

Topologically, residues 1–14 (MPYPMQLGFQDATS) are mitochondrial intermembrane. A helical transmembrane segment spans residues 15–45 (PIMEELMYFHDHTLMIVFLISSLVLYIIILM). Residues 46–59 (LTTKLTHTSTMDAQ) lie on the Mitochondrial matrix side of the membrane. A helical membrane pass occupies residues 60–87 (EVETIWTILPAVILILIALPSLRILYMM). The Mitochondrial intermembrane segment spans residues 88-235 (DEIYNPYLTV…MQSFLSYLYI (148 aa)). 6 residues coordinate Cu cation: H161, C196, E198, C200, H204, and M207. E198 provides a ligand contact to Mg(2+). Y218 bears the Phosphotyrosine mark.

The protein belongs to the cytochrome c oxidase subunit 2 family. As to quaternary structure, component of the cytochrome c oxidase (complex IV, CIV), a multisubunit enzyme composed of 14 subunits. The complex is composed of a catalytic core of 3 subunits MT-CO1, MT-CO2 and MT-CO3, encoded in the mitochondrial DNA, and 11 supernumerary subunits COX4I, COX5A, COX5B, COX6A, COX6B, COX6C, COX7A, COX7B, COX7C, COX8 and NDUFA4, which are encoded in the nuclear genome. The complex exists as a monomer or a dimer and forms supercomplexes (SCs) in the inner mitochondrial membrane with NADH-ubiquinone oxidoreductase (complex I, CI) and ubiquinol-cytochrome c oxidoreductase (cytochrome b-c1 complex, complex III, CIII), resulting in different assemblies (supercomplex SCI(1)III(2)IV(1) and megacomplex MCI(2)III(2)IV(2)). Found in a complex with TMEM177, COA6, COX18, COX20, SCO1 and SCO2. Interacts with TMEM177 in a COX20-dependent manner. Interacts with COX20. Interacts with COX16. The cofactor is Cu cation.

It is found in the mitochondrion inner membrane. The enzyme catalyses 4 Fe(II)-[cytochrome c] + O2 + 8 H(+)(in) = 4 Fe(III)-[cytochrome c] + 2 H2O + 4 H(+)(out). Its function is as follows. Component of the cytochrome c oxidase, the last enzyme in the mitochondrial electron transport chain which drives oxidative phosphorylation. The respiratory chain contains 3 multisubunit complexes succinate dehydrogenase (complex II, CII), ubiquinol-cytochrome c oxidoreductase (cytochrome b-c1 complex, complex III, CIII) and cytochrome c oxidase (complex IV, CIV), that cooperate to transfer electrons derived from NADH and succinate to molecular oxygen, creating an electrochemical gradient over the inner membrane that drives transmembrane transport and the ATP synthase. Cytochrome c oxidase is the component of the respiratory chain that catalyzes the reduction of oxygen to water. Electrons originating from reduced cytochrome c in the intermembrane space (IMS) are transferred via the dinuclear copper A center (CU(A)) of subunit 2 and heme A of subunit 1 to the active site in subunit 1, a binuclear center (BNC) formed by heme A3 and copper B (CU(B)). The BNC reduces molecular oxygen to 2 water molecules using 4 electrons from cytochrome c in the IMS and 4 protons from the mitochondrial matrix. The chain is Cytochrome c oxidase subunit 2 (MT-CO2) from Didelphis virginiana (North American opossum).